A 335-amino-acid polypeptide reads, in one-letter code: tRNA N6-adenosine threonylcarbamoyltransferase (335 aa).

Residues histidine 111 and histidine 115 each contribute to the Fe cation site. Residues 133–137 (LISGG), aspartate 166, glycine 179, and asparagine 276 each bind substrate. Fe cation is bound at residue aspartate 301.

The protein belongs to the KAE1 / TsaD family. Requires Fe(2+) as cofactor.

It localises to the cytoplasm. The catalysed reaction is L-threonylcarbamoyladenylate + adenosine(37) in tRNA = N(6)-L-threonylcarbamoyladenosine(37) in tRNA + AMP + H(+). Its function is as follows. Required for the formation of a threonylcarbamoyl group on adenosine at position 37 (t(6)A37) in tRNAs that read codons beginning with adenine. Is involved in the transfer of the threonylcarbamoyl moiety of threonylcarbamoyl-AMP (TC-AMP) to the N6 group of A37, together with TsaE and TsaB. TsaD likely plays a direct catalytic role in this reaction. The polypeptide is tRNA N6-adenosine threonylcarbamoyltransferase (Wolbachia sp. subsp. Drosophila simulans (strain wRi)).